Consider the following 208-residue polypeptide: Interleukin-6 (208 aa).

The N-terminal stretch at 1–29 (MNSRFTSAFTPFAVSLGLLLVMTSAFPTP) is a signal peptide. N-linked (GlcNAc...) asparagine glycosylation is present at asparagine 38. A disulfide bridge connects residues cysteine 72 and cysteine 78. Serine 81 is modified (phosphoserine). The cysteines at positions 101 and 111 are disulfide-linked.

Belongs to the IL-6 superfamily. In terms of assembly, component of a hexamer of two molecules each of IL6, IL6R and IL6ST; first binds to IL6R to associate with the signaling subunit IL6ST. Interacts with IL6R (via the N-terminal ectodomain); this interaction may be affected by IL6R-binding with SORL1, hence decreasing IL6 cis signaling. Interacts with SORL1 (via the N-terminal ectodomain); this interaction leads to IL6 internalization and lysosomal degradation. May form a trimeric complex with the soluble SORL1 ectodomain and soluble IL6R receptor; this interaction might stabilize circulating IL6, hence promoting IL6 trans signaling.

It localises to the secreted. Cytokine with a wide variety of biological functions in immunity, tissue regeneration, and metabolism. Binds to IL6R, then the complex associates to the signaling subunit IL6ST/gp130 to trigger the intracellular IL6-signaling pathway. The interaction with the membrane-bound IL6R and IL6ST stimulates 'classic signaling', whereas the binding of IL6 and soluble IL6R to IL6ST stimulates 'trans-signaling'. Alternatively, 'cluster signaling' occurs when membrane-bound IL6:IL6R complexes on transmitter cells activate IL6ST receptors on neighboring receiver cells. In terms of biological role, IL6 is a potent inducer of the acute phase response. Rapid production of IL6 contributes to host defense during infection and tissue injury, but excessive IL6 synthesis is involved in disease pathology. In the innate immune response, is synthesized by myeloid cells, such as macrophages and dendritic cells, upon recognition of pathogens through toll-like receptors (TLRs) at the site of infection or tissue injury. In the adaptive immune response, is required for the differentiation of B cells into immunoglobulin-secreting cells. Plays a major role in the differentiation of CD4(+) T cell subsets. Essential factor for the development of T follicular helper (Tfh) cells that are required for the induction of germinal-center formation. Required to drive naive CD4(+) T cells to the Th17 lineage. Also required for proliferation of myeloma cells and the survival of plasmablast cells. Its function is as follows. Acts as an essential factor in bone homeostasis and on vessels directly or indirectly by induction of VEGF, resulting in increased angiogenesis activity and vascular permeability. Induces, through 'trans-signaling' and synergistically with IL1B and TNF, the production of VEGF. Involved in metabolic controls, is discharged into the bloodstream after muscle contraction increasing lipolysis and improving insulin resistance. 'Trans-signaling' in central nervous system also regulates energy and glucose homeostasis. Mediates, through GLP-1, crosstalk between insulin-sensitive tissues, intestinal L cells and pancreatic islets to adapt to changes in insulin demand. Also acts as a myokine. Plays a protective role during liver injury, being required for maintenance of tissue regeneration. Also has a pivotal role in iron metabolism by regulating HAMP/hepcidin expression upon inflammation or bacterial infection. Through activation of IL6ST-YAP-NOTCH pathway, induces inflammation-induced epithelial regeneration. In Bubalus bubalis (Domestic water buffalo), this protein is Interleukin-6 (IL6).